The sequence spans 313 residues: Pantoate--beta-alanine ligase (313 aa).

ATP is bound at residue 36–43; it reads MGYLHQGH. His-43 serves as the catalytic Proton donor. (R)-pantoate is bound at residue Gln-71. Residue Gln-71 coordinates beta-alanine. 178-181 serves as a coordination point for ATP; that stretch reads GKKD. Residue Gln-184 participates in (R)-pantoate binding. ATP is bound at residue 215 to 218; that stretch reads MSSR.

The protein belongs to the pantothenate synthetase family. Homodimer.

The protein localises to the cytoplasm. It is found in the cytosol. The catalysed reaction is (R)-pantoate + beta-alanine + ATP = (R)-pantothenate + AMP + diphosphate + H(+). The protein operates within cofactor biosynthesis; (R)-pantothenate biosynthesis; (R)-pantothenate from (R)-pantoate and beta-alanine: step 1/1. In terms of biological role, catalyzes the condensation of pantoate with beta-alanine to form pantothenate. Essential for panthotenate biosynthesis. This is Pantoate--beta-alanine ligase (PANC) from Oryza sativa subsp. japonica (Rice).